Consider the following 425-residue polypeptide: Gamma-glutamyl phosphate reductase (425 aa).

The protein belongs to the gamma-glutamyl phosphate reductase family.

The protein resides in the cytoplasm. It carries out the reaction L-glutamate 5-semialdehyde + phosphate + NADP(+) = L-glutamyl 5-phosphate + NADPH + H(+). The protein operates within amino-acid biosynthesis; L-proline biosynthesis; L-glutamate 5-semialdehyde from L-glutamate: step 2/2. Its function is as follows. Catalyzes the NADPH-dependent reduction of L-glutamate 5-phosphate into L-glutamate 5-semialdehyde and phosphate. The product spontaneously undergoes cyclization to form 1-pyrroline-5-carboxylate. This Novosphingobium aromaticivorans (strain ATCC 700278 / DSM 12444 / CCUG 56034 / CIP 105152 / NBRC 16084 / F199) protein is Gamma-glutamyl phosphate reductase.